A 255-amino-acid chain; its full sequence is Proteasome subunit alpha (255 aa).

Residues 190-201 (PSTSGASGNGET) are compositionally biased toward polar residues. Positions 190 to 255 (PSTSGASGNG…DKSSGDGEQN (66 aa)) are disordered. Residues 202 to 217 (EPSKLEVAILDRERPG) are compositionally biased toward basic and acidic residues.

It belongs to the peptidase T1A family. As to quaternary structure, the 20S proteasome core is composed of 14 alpha and 14 beta subunits that assemble into four stacked heptameric rings, resulting in a barrel-shaped structure. The two inner rings, each composed of seven catalytic beta subunits, are sandwiched by two outer rings, each composed of seven alpha subunits. The catalytic chamber with the active sites is on the inside of the barrel. Has a gated structure, the ends of the cylinder being occluded by the N-termini of the alpha-subunits. Is capped by the proteasome-associated ATPase, ARC.

Its subcellular location is the cytoplasm. It functions in the pathway protein degradation; proteasomal Pup-dependent pathway. Its activity is regulated as follows. The formation of the proteasomal ATPase ARC-20S proteasome complex, likely via the docking of the C-termini of ARC into the intersubunit pockets in the alpha-rings, may trigger opening of the gate for substrate entry. Interconversion between the open-gate and close-gate conformations leads to a dynamic regulation of the 20S proteasome proteolysis activity. Functionally, component of the proteasome core, a large protease complex with broad specificity involved in protein degradation. The protein is Proteasome subunit alpha of Saccharomonospora viridis (strain ATCC 15386 / DSM 43017 / JCM 3036 / CCUG 5913 / NBRC 12207 / NCIMB 9602 / P101) (Thermoactinomyces viridis).